The following is a 730-amino-acid chain: Polyribonucleotide nucleotidyltransferase (730 aa).

Residues Asp-489 and Asp-495 each coordinate Mg(2+). The region spanning 556 to 615 is the KH domain; that stretch reads PKIDTIKVDVDKIKIVIGKGGETIDKIIEETGVKIDIDEDGNIAIYSSDQEAINRTKEII. The region spanning 625–693 is the S1 motif domain; it reads GEIYEAEVVR…DKGRIDASMK (69 aa). A disordered region spans residues 691-730; the sequence is SMKALLPRPPRSEKSNKEDHQSVRHHGSPKDDKGKEKYDK. Basic and acidic residues predominate over residues 700 to 730; sequence PRSEKSNKEDHQSVRHHGSPKDDKGKEKYDK.

Belongs to the polyribonucleotide nucleotidyltransferase family. Requires Mg(2+) as cofactor.

It is found in the cytoplasm. It carries out the reaction RNA(n+1) + phosphate = RNA(n) + a ribonucleoside 5'-diphosphate. In terms of biological role, involved in mRNA degradation. Catalyzes the phosphorolysis of single-stranded polyribonucleotides processively in the 3'- to 5'-direction. The polypeptide is Polyribonucleotide nucleotidyltransferase (Streptococcus mutans serotype c (strain ATCC 700610 / UA159)).